The sequence spans 536 residues: Phosphoenolpyruvate carboxykinase (ATP) (536 aa).

Arg61, Tyr195, and Lys201 together coordinate substrate. ATP is bound by residues Lys201, His220, and 236 to 244 (GLSGTGKTT). The Mn(2+) site is built by Lys201 and His220. A Mn(2+)-binding site is contributed by Asp257. Glu285, Arg322, and Thr447 together coordinate ATP. Arg322 is a binding site for substrate.

It belongs to the phosphoenolpyruvate carboxykinase (ATP) family. The cofactor is Mn(2+).

Its subcellular location is the cytoplasm. The catalysed reaction is oxaloacetate + ATP = phosphoenolpyruvate + ADP + CO2. Its pathway is carbohydrate biosynthesis; gluconeogenesis. Its function is as follows. Involved in the gluconeogenesis. Catalyzes the conversion of oxaloacetate (OAA) to phosphoenolpyruvate (PEP) through direct phosphoryl transfer between the nucleoside triphosphate and OAA. This chain is Phosphoenolpyruvate carboxykinase (ATP), found in Brucella anthropi (strain ATCC 49188 / DSM 6882 / CCUG 24695 / JCM 21032 / LMG 3331 / NBRC 15819 / NCTC 12168 / Alc 37) (Ochrobactrum anthropi).